We begin with the raw amino-acid sequence, 724 residues long: Threonine--tRNA ligase 2, cytoplasmic (724 aa).

A2 carries the N-acetylalanine modification. Positions 44 to 72 (QAEGPCLTREVAQLRAENRELRHCLYRLR) form a coiled coil. Positions 90-112 (RAEAGRAAAGAQPPPSQSLEEDV) are disordered. The TGS domain maps to 155-220 (DSSNVITVRV…EGDATVELLT (66 aa)). A Phosphoserine modification is found at S451.

It belongs to the class-II aminoacyl-tRNA synthetase family. In terms of assembly, may be a component of the multisynthetase complex (MSC), a large multi-subunit complex which contains at least eight different aminoacyl-tRNA synthetases plus three auxillary subunits AIMP1, AIMP2 and EEF1E1. Interacts with the MSC components EPRS1, AIMP1, AIMP2 and KARS1.

The protein resides in the cytoplasm. Its subcellular location is the nucleus. The enzyme catalyses tRNA(Thr) + L-threonine + ATP = L-threonyl-tRNA(Thr) + AMP + diphosphate + H(+). Its function is as follows. Catalyzes the attachment of threonine to tRNA(Thr) in a two-step reaction: threonine is first activated by ATP to form Thr-AMP and then transferred to the acceptor end of tRNA(Thr). Also edits incorrectly charged tRNA(Thr) via its editing domain, at the post-transfer stage. The polypeptide is Threonine--tRNA ligase 2, cytoplasmic (TARS3) (Bos taurus (Bovine)).